Here is a 449-residue protein sequence, read N- to C-terminus: MGFKRTIGLLLGILLALDQVSVLAQPGRPTFAKRPDIQPNPIQPYKAIPLHSRRNSHKVCYVKPSLNGGDDAGRVEAALRRCNNGGTIVLDKEYSICTPLDLRFLKHVDVALTGKVEFCPELEFWQQNVFQFHFQNASSWWVWGGEDIHLYGAGTGVIHGNGQPWWDAAAGNSSVRRPLLFITDGWHGGSITGLKLRQSPNWHNFIANSSDLLISDMDIFSRSSSEAWASNLDGWDTFRSDNVVIQNSVINHDDDCVSFKPNSTNIIVQGLHCNGSHGISVGSLGNYPYQYDIVSDLYIYNNTMANTTTAARLKVWPGAEAVKKGNPPWVGGGGKGYVRNVTYDLMINDNNDLAIQIDQCYGAINASECLDHPSGVILTNVLFKNMWGTSNGANDPVAGQLICGSADSCDNIRAENVTLTNSSGQPSEWQCRYMDEELLDLGGVGCIPA.

An N-terminal signal peptide occupies residues 1–24 (MGFKRTIGLLLGILLALDQVSVLA). N-linked (GlcNAc...) asparagine glycosylation is found at N136, N172, and N208. A PbH1 1 repeat occupies 240-261 (SDNVVIQNSVINHDDDCVSFKP). Catalysis depends on D254, which acts as the Proton donor. Cysteines 256 and 273 form a disulfide. Residues N262 and N274 are each glycosylated (N-linked (GlcNAc...) asparagine). PbH1 repeat units follow at residues 263 to 283 (STNI…SVGS) and 294 to 315 (VSDL…RLKV). Residue H277 is part of the active site. Residues N301, N306, N340, and N365 are each glycosylated (N-linked (GlcNAc...) asparagine). Residues C403 and C409 are joined by a disulfide bond. N416 and N421 each carry an N-linked (GlcNAc...) asparagine glycan.

It belongs to the glycosyl hydrolase 28 family.

Its subcellular location is the secreted. The enzyme catalyses [(1-&gt;4)-alpha-D-galacturonosyl](n) + H2O = alpha-D-galacturonate + [(1-&gt;4)-alpha-D-galacturonosyl](n-1). Specific in hydrolyzing the terminal glycosidic bond of polygalacturonic acid and oligogalacturonates. The sequence is that of Exopolygalacturonase X-2 (pgaX-2) from Emericella nidulans (strain FGSC A4 / ATCC 38163 / CBS 112.46 / NRRL 194 / M139) (Aspergillus nidulans).